The following is a 624-amino-acid chain: MAKVIQLSDELSNKIAAGEVVERPASVVKELVENAIDANSTVIEIDIEEAGLSSIRVLDNGEGMETDDCKRAFRRHATSKIKDENDLFRVRTLGFRGEALPSIASVSHLEIKTSIGEGAGTHLILQGGNIISEQKSSSRKGTEIIVTNLFFNTPARLKYMKTVHTELGNITDVVNRIALAHPEVSIRLRHQGKNLLQTNGNGDVRHVLAAIYGTAVAKKMIPLHISSLDFEVKGYIALPEITRASRNYMSSVINGRYIKNFPLVKAVHEGYHTLLPIGRHPITFIEITMDPILVDVNVHPSKLEVRLSKETELHELIRDGIKEVFQKQRLIPSAQLPKKSAPAPAKNEQQFMTFEESAPERKLPEKTPEPSYSPMKLSSVVKEPEPVIIEEEILPNEADHGVPPELGMPETAAPVSDTPEPEAVSEEIREERVPMMYPIGQMHGTYILAQNENGLYIIDQHAAQERIKYEYFREKVGQVEPEVQDMIVPLTFHYAANEALIIDQHQHELESVGVFLEAFGTNSYIVRCHPAWFPKGEEAELIEEIIQQVLDAKQIDIKKLREEAAIMMSCKGSIKANRHLRNDEIKALLDDLRRTTDPFTCPHGRPIIIHHSTYEMEKMFKRVM.

The segment at Glu-355 to Leu-377 is disordered. A compositionally biased stretch (basic and acidic residues) spans Ala-358 to Pro-368.

Belongs to the DNA mismatch repair MutL/HexB family.

In terms of biological role, this protein is involved in the repair of mismatches in DNA. It is required for dam-dependent methyl-directed DNA mismatch repair. May act as a 'molecular matchmaker', a protein that promotes the formation of a stable complex between two or more DNA-binding proteins in an ATP-dependent manner without itself being part of a final effector complex. This is DNA mismatch repair protein MutL from Bacillus velezensis (strain DSM 23117 / BGSC 10A6 / LMG 26770 / FZB42) (Bacillus amyloliquefaciens subsp. plantarum).